Reading from the N-terminus, the 397-residue chain is L-cysteine desulfidase (397 aa).

Cys-23 (proton acceptor) is an active-site residue. 3 residues coordinate [4Fe-4S] cluster: Cys-288, Cys-330, and Cys-337.

This sequence belongs to the L-cysteine desulfidase family. Homotrimer. The cofactor is [4Fe-4S] cluster.

It catalyses the reaction L-cysteine + H2O = hydrogen sulfide + pyruvate + NH4(+) + H(+). Its function is as follows. Catalyzes the cleavage of L-cysteine to form 2-aminoprop-2-enoate and sulfide. The former then spontaneously hydrolyzes to pyruvate and NH(3). May be responsible for the production of sulfide required for the biosynthesis of iron-sulfur centers in this archaea. This is L-cysteine desulfidase from Methanococcus maripaludis (strain C7 / ATCC BAA-1331).